The chain runs to 361 residues: Peptide chain release factor 1 (361 aa).

An N5-methylglutamine modification is found at Gln-237. Basic and acidic residues predominate over residues 287 to 297 (KQQKEQSDTRK). Positions 287-313 (KQQKEQSDTRKSLVGSGDRSERIRTYN) are disordered.

Belongs to the prokaryotic/mitochondrial release factor family. In terms of processing, methylated by PrmC. Methylation increases the termination efficiency of RF1.

It is found in the cytoplasm. In terms of biological role, peptide chain release factor 1 directs the termination of translation in response to the peptide chain termination codons UAG and UAA. This chain is Peptide chain release factor 1, found in Francisella tularensis subsp. novicida (strain U112).